We begin with the raw amino-acid sequence, 568 residues long: 4-hydroxy-7-methoxy-3-oxo-3,4-dihydro-2H-1,4-benzoxazin-2-yl glucoside beta-D-glucosidase, chloroplastic (568 aa).

The N-terminal 50 residues, 1–50, are a transit peptide targeting the chloroplast; the sequence is MALLVGGTLNPTTHLSLRSRAGRNSENVWLRSAASSQTSKGRFCNLTVRA. Residues glutamine 92, histidine 194, and 239–240 each bind a beta-D-glucoside; that span reads NE. Catalysis depends on glutamate 240, which acts as the Proton donor. Cysteine 259 and cysteine 265 are joined by a disulfide. Residues tyrosine 383, glutamate 456, tryptophan 504, 511-512, and phenylalanine 520 each bind a beta-D-glucoside; that span reads EW. The Nucleophile role is filled by glutamate 456.

It belongs to the glycosyl hydrolase 1 family. In terms of assembly, homohexamer. Expressed in seedlings, mesocotyl, coleoptile, leaf sheath, and roots.

It localises to the plastid. The protein localises to the chloroplast. It catalyses the reaction DIMBOA beta-D-glucoside + H2O = DIMBOA + D-glucose. The catalysed reaction is DIBOA beta-D-glucoside + H2O = DIBOA + D-glucose. The enzyme catalyses Hydrolysis of terminal, non-reducing beta-D-glucosyl residues with release of beta-D-glucose.. Inhibited by castanospermine, Ag(+) and Cu(2+). 34% inhibition by Zn(2+) and not affected by EDTA. Involved in defense of young plant parts against pests via the production of benzoxazolinones (hydroxamic acids) from hydroxamic acid glucosides. The preferred substrate is DIBOA-beta-D-glucoside. Can also use esculin and genistein glucoside as substrates, but no activity with salicin, p-nitrophenyl-alpha-glucoside or substrates related to cell wall components. This is 4-hydroxy-7-methoxy-3-oxo-3,4-dihydro-2H-1,4-benzoxazin-2-yl glucoside beta-D-glucosidase, chloroplastic from Secale cereale (Rye).